We begin with the raw amino-acid sequence, 92 residues long: MSADSAWYLYLLECTGDSIYTGITTDVARRFAEHLSGKGAKYTRSRKPIRVLGQLRFDTKSEALKAEIEIKRLSSTQKRAFCAQLPATEPAR.

Positions 5-80 (SAWYLYLLEC…KRLSSTQKRA (76 aa)) constitute a GIY-YIG domain.

This sequence belongs to the UPF0213 family.

The sequence is that of UPF0213 protein H16_B0156 from Cupriavidus necator (strain ATCC 17699 / DSM 428 / KCTC 22496 / NCIMB 10442 / H16 / Stanier 337) (Ralstonia eutropha).